A 197-amino-acid chain; its full sequence is Putative double homeobox protein 3 (197 aa).

DNA-binding regions (homeobox) lie at residues 46–105 (GRRM…LRQH) and 121–180 (GRRK…WGQS). Residues 102-127 (LRQHRRQSRPWPGRRDPQKGRRKRTA) form a disordered region.

It belongs to the paired homeobox family. Expressed in hepatoma Hep3B cells.

It localises to the nucleus. The chain is Putative double homeobox protein 3 (DUX3) from Homo sapiens (Human).